Consider the following 328-residue polypeptide: Methionyl-tRNA formyltransferase (328 aa).

110–113 (SNLP) contacts (6S)-5,6,7,8-tetrahydrofolate.

This sequence belongs to the Fmt family.

It carries out the reaction L-methionyl-tRNA(fMet) + (6R)-10-formyltetrahydrofolate = N-formyl-L-methionyl-tRNA(fMet) + (6S)-5,6,7,8-tetrahydrofolate + H(+). In terms of biological role, attaches a formyl group to the free amino group of methionyl-tRNA(fMet). The formyl group appears to play a dual role in the initiator identity of N-formylmethionyl-tRNA by promoting its recognition by IF2 and preventing the misappropriation of this tRNA by the elongation apparatus. This is Methionyl-tRNA formyltransferase from Bifidobacterium longum (strain DJO10A).